The chain runs to 361 residues: MAGNSIGQFFRVTTFGESHGIALGCIIDGVPPGIPITEADIQLDLDRRRPGTSRYTTQRRELDQVRILSGVFEGVTTGTSIGLMIENTDQRSQDYSAIKDVFRPGHADYTYEQKYGVRDYRGGGRSSARETAMRVAAGAIAKKYLAQKFGVQVRGYLAQMGDVSCDLLDWDLVEQNPFFCPDASKLEPLDALMRELKKAGDSIGAKITVVAENVPVGLGEPVFDRLDADLAHALMSINAVKGVEIGDGFAVVTKRGSENRDEITPQGFQSNHAGGILGGISSGQPVVAHIALKPTSSIMVPGQTINRQGEAVEIVTRGRHDPCVGIRAVPIAEAMMAIVLMDHLLRQRAQCGDVASDVPRW.

NADP(+) contacts are provided by arginine 48 and arginine 54. FMN contacts are provided by residues 125 to 127 (RSS), 238 to 239 (NA), glycine 278, 293 to 297 (KPTSS), and arginine 319.

The protein belongs to the chorismate synthase family. In terms of assembly, homotetramer. It depends on FMNH2 as a cofactor.

The catalysed reaction is 5-O-(1-carboxyvinyl)-3-phosphoshikimate = chorismate + phosphate. It participates in metabolic intermediate biosynthesis; chorismate biosynthesis; chorismate from D-erythrose 4-phosphate and phosphoenolpyruvate: step 7/7. Functionally, catalyzes the anti-1,4-elimination of the C-3 phosphate and the C-6 proR hydrogen from 5-enolpyruvylshikimate-3-phosphate (EPSP) to yield chorismate, which is the branch point compound that serves as the starting substrate for the three terminal pathways of aromatic amino acid biosynthesis. This reaction introduces a second double bond into the aromatic ring system. The protein is Chorismate synthase of Yersinia pseudotuberculosis serotype IB (strain PB1/+).